A 122-amino-acid polypeptide reads, in one-letter code: NADH-quinone oxidoreductase subunit A (122 aa).

3 helical membrane passes run 10 to 30, 66 to 86, and 91 to 111; these read MIVG…LTLG, IFAL…PWAV, and LGLF…IGLA.

The protein belongs to the complex I subunit 3 family. NDH-1 is composed of 14 different subunits. Subunits NuoA, H, J, K, L, M, N constitute the membrane sector of the complex.

The protein resides in the cell membrane. It carries out the reaction a quinone + NADH + 5 H(+)(in) = a quinol + NAD(+) + 4 H(+)(out). NDH-1 shuttles electrons from NADH, via FMN and iron-sulfur (Fe-S) centers, to quinones in the respiratory chain. The immediate electron acceptor for the enzyme in this species is believed to be a menaquinone. Couples the redox reaction to proton translocation (for every two electrons transferred, four hydrogen ions are translocated across the cytoplasmic membrane), and thus conserves the redox energy in a proton gradient. The chain is NADH-quinone oxidoreductase subunit A from Bacillus cytotoxicus (strain DSM 22905 / CIP 110041 / 391-98 / NVH 391-98).